Here is a 574-residue protein sequence, read N- to C-terminus: Proline--tRNA ligase (574 aa).

This sequence belongs to the class-II aminoacyl-tRNA synthetase family. ProS type 1 subfamily. As to quaternary structure, homodimer.

It is found in the cytoplasm. The catalysed reaction is tRNA(Pro) + L-proline + ATP = L-prolyl-tRNA(Pro) + AMP + diphosphate. Its function is as follows. Catalyzes the attachment of proline to tRNA(Pro) in a two-step reaction: proline is first activated by ATP to form Pro-AMP and then transferred to the acceptor end of tRNA(Pro). As ProRS can inadvertently accommodate and process non-cognate amino acids such as alanine and cysteine, to avoid such errors it has two additional distinct editing activities against alanine. One activity is designated as 'pretransfer' editing and involves the tRNA(Pro)-independent hydrolysis of activated Ala-AMP. The other activity is designated 'posttransfer' editing and involves deacylation of mischarged Ala-tRNA(Pro). The misacylated Cys-tRNA(Pro) is not edited by ProRS. This is Proline--tRNA ligase from Thioalkalivibrio sulfidiphilus (strain HL-EbGR7).